We begin with the raw amino-acid sequence, 142 residues long: Cytidine deaminase (142 aa).

Residues 9–139 (RQLEALKRAA…ELLPMAFGPS (131 aa)) form the CMP/dCMP-type deaminase domain. Position 50 to 52 (50 to 52 (NVE)) interacts with substrate. Cysteine 61 contacts Zn(2+). Glutamate 63 acts as the Proton donor in catalysis. 2 residues coordinate Zn(2+): cysteine 96 and cysteine 99.

It belongs to the cytidine and deoxycytidylate deaminase family. In terms of assembly, homodimer. It depends on Zn(2+) as a cofactor.

The enzyme catalyses cytidine + H2O + H(+) = uridine + NH4(+). It catalyses the reaction 2'-deoxycytidine + H2O + H(+) = 2'-deoxyuridine + NH4(+). In terms of biological role, this enzyme scavenges exogenous and endogenous cytidine and 2'-deoxycytidine for UMP synthesis. The chain is Cytidine deaminase (CDD1) from Saccharomyces cerevisiae (strain ATCC 204508 / S288c) (Baker's yeast).